We begin with the raw amino-acid sequence, 165 residues long: Small ribosomal subunit protein uS17m (165 aa).

Belongs to the universal ribosomal protein uS17 family. In terms of assembly, component of the mitochondrial small ribosomal subunit (mt-SSU). Mature N.crassa 74S mitochondrial ribosomes consist of a small (37S) and a large (54S) subunit. The 37S small subunit contains a 16S ribosomal RNA (16S mt-rRNA) and 32 different proteins. The 54S large subunit contains a 23S rRNA (23S mt-rRNA) and 42 different proteins. uS17m interacts with the F(1)-ATPase inhibitor IF(1) dimer.

Its subcellular location is the mitochondrion. Component of the mitochondrial ribosome (mitoribosome), a dedicated translation machinery responsible for the synthesis of mitochondrial genome-encoded proteins, including at least some of the essential transmembrane subunits of the mitochondrial respiratory chain. The mitoribosomes are attached to the mitochondrial inner membrane and translation products are cotranslationally integrated into the membrane. The protein is Small ribosomal subunit protein uS17m (mrps17) of Neurospora crassa (strain ATCC 24698 / 74-OR23-1A / CBS 708.71 / DSM 1257 / FGSC 987).